We begin with the raw amino-acid sequence, 106 residues long: MRTLLLYVVTAVAEIVGCYLPWRWLKEGGSVWLLLPGALSLALFAWLLTFHGTAAGRVYAAYGGVYVAVAILWLWCVDHVRPSAWDLAGVALTLAGMSIIAFQPRL.

Helical transmembrane passes span 4 to 24 (LLLYVVTAVAEIVGCYLPWRW), 30 to 50 (SVWLLLPGALSLALFAWLLTF), 58 to 78 (VYAAYGGVYVAVAILWLWCVD), and 82 to 102 (PSAWDLAGVALTLAGMSIIAF).

This sequence belongs to the UPF0060 family.

It localises to the cell inner membrane. This Paraburkholderia phymatum (strain DSM 17167 / CIP 108236 / LMG 21445 / STM815) (Burkholderia phymatum) protein is UPF0060 membrane protein Bphy_5052.